The primary structure comprises 213 residues: Probable transaldolase (213 aa).

The active-site Schiff-base intermediate with substrate is Lys83.

The protein belongs to the transaldolase family. Type 3B subfamily.

The protein resides in the cytoplasm. The enzyme catalyses D-sedoheptulose 7-phosphate + D-glyceraldehyde 3-phosphate = D-erythrose 4-phosphate + beta-D-fructose 6-phosphate. The protein operates within carbohydrate degradation; pentose phosphate pathway; D-glyceraldehyde 3-phosphate and beta-D-fructose 6-phosphate from D-ribose 5-phosphate and D-xylulose 5-phosphate (non-oxidative stage): step 2/3. Its function is as follows. Transaldolase is important for the balance of metabolites in the pentose-phosphate pathway. This chain is Probable transaldolase, found in Geobacillus kaustophilus (strain HTA426).